We begin with the raw amino-acid sequence, 612 residues long: Probable cytosolic Fe-S cluster assembly factor SJAG_02895 (612 aa).

An ATP-binding site is contributed by 13-20; that stretch reads GKGGVGKS. [4Fe-4S] cluster-binding residues include C200 and C203. WD repeat units follow at residues 287 to 326, 330 to 370, 375 to 414, 420 to 459, 464 to 503, 528 to 566, and 574 to 612; these read GHRGRIWSVAVHPTLPLVATASEDKSVRVFQAQTGELIHV, YHTR…WECV, GHENEVKCVAWSHDGVYLATCSRDKSVWIWEAMEDDEFDC, EHTQDVKVVAWHPKDDLLVSGSYDNTIRFWRDDGDDWVQT, SHTSTVWALNFSPDGRLLASGDGEGEVFIWEKLVSNEDAA, TFTEPVYTLGWKDDHTLCASGAEGTIGLFAYEDDVSTWH, and AHDVYEINTIAWTNDSRLLSGGDDGLCNVWKLSEADQTA.

It in the N-terminal section; belongs to the Mrp/NBP35 ATP-binding proteins family. NUBP2/CFD1 subfamily. This sequence in the C-terminal section; belongs to the WD repeat CIA1 family. In terms of assembly, heterotetramer of 2 nbp35 and 2 SJAG_02895 chains. It depends on [4Fe-4S] cluster as a cofactor.

The protein resides in the cytoplasm. It localises to the nucleus. Fusion protein of two essential components of the cytosolic iron-sulfur (Fe/S) protein assembly (CIA) machinery. Required for maturation of extramitochondrial Fe-S proteins. May form a heterotetramer with nubp35, functioning as a Fe-S scaffold complex, mediating the de novo assembly of an Fe-S cluster and its transfer to target apoproteins. The polypeptide is Probable cytosolic Fe-S cluster assembly factor SJAG_02895 (Schizosaccharomyces japonicus (strain yFS275 / FY16936) (Fission yeast)).